The chain runs to 246 residues: UDP-N-acetyl-D-mannosaminuronic acid transferase (246 aa).

This sequence belongs to the glycosyltransferase 26 family.

It catalyses the reaction UDP-N-acetyl-alpha-D-mannosaminouronate + N-acetyl-alpha-D-glucosaminyl-di-trans,octa-cis-undecaprenyl diphosphate = beta-D-ManNAcA-(1-&gt;4)-alpha-D-GlcNAc-di-trans,octa-cis-undecaprenyl diphosphate + UDP + H(+). Its pathway is bacterial outer membrane biogenesis; enterobacterial common antigen biosynthesis. Catalyzes the synthesis of Und-PP-GlcNAc-ManNAcA (Lipid II), the second lipid-linked intermediate involved in enterobacterial common antigen (ECA) synthesis. The sequence is that of UDP-N-acetyl-D-mannosaminuronic acid transferase from Salmonella schwarzengrund (strain CVM19633).